A 156-amino-acid polypeptide reads, in one-letter code: Small ribosomal subunit protein uS7c (156 aa).

This sequence belongs to the universal ribosomal protein uS7 family. In terms of assembly, part of the 30S ribosomal subunit.

Its subcellular location is the plastid. It localises to the chloroplast. Its function is as follows. One of the primary rRNA binding proteins, it binds directly to 16S rRNA where it nucleates assembly of the head domain of the 30S subunit. The polypeptide is Small ribosomal subunit protein uS7c (rps7) (Chara vulgaris (Common stonewort)).